Consider the following 198-residue polypeptide: Segregation and condensation protein B (198 aa).

Residues 168 to 198 (KLADPATDEPDQNEMDLFFDRFNQSKEQEEE) form a disordered region.

The protein belongs to the ScpB family. As to quaternary structure, homodimer. Homodimerization may be required to stabilize the binding of ScpA to the Smc head domains. Component of a cohesin-like complex composed of ScpA, ScpB and the Smc homodimer, in which ScpA and ScpB bind to the head domain of Smc. The presence of the three proteins is required for the association of the complex with DNA.

It localises to the cytoplasm. Participates in chromosomal partition during cell division. May act via the formation of a condensin-like complex containing Smc and ScpA that pull DNA away from mid-cell into both cell halves. The polypeptide is Segregation and condensation protein B (Listeria monocytogenes serovar 1/2a (strain ATCC BAA-679 / EGD-e)).